The following is a 255-amino-acid chain: 4-hydroxy-tetrahydrodipicolinate reductase (255 aa).

NAD(+) is bound by residues 9 to 14, 89 to 91, and 115 to 118; these read GFKGKM, GTT, and APNF. Catalysis depends on H145, which acts as the Proton donor/acceptor. Residue H146 coordinates (S)-2,3,4,5-tetrahydrodipicolinate. K149 functions as the Proton donor in the catalytic mechanism. 155 to 156 serves as a coordination point for (S)-2,3,4,5-tetrahydrodipicolinate; sequence GT.

It belongs to the DapB family.

The protein localises to the cytoplasm. The catalysed reaction is (S)-2,3,4,5-tetrahydrodipicolinate + NAD(+) + H2O = (2S,4S)-4-hydroxy-2,3,4,5-tetrahydrodipicolinate + NADH + H(+). The enzyme catalyses (S)-2,3,4,5-tetrahydrodipicolinate + NADP(+) + H2O = (2S,4S)-4-hydroxy-2,3,4,5-tetrahydrodipicolinate + NADPH + H(+). The protein operates within amino-acid biosynthesis; L-lysine biosynthesis via DAP pathway; (S)-tetrahydrodipicolinate from L-aspartate: step 4/4. Catalyzes the conversion of 4-hydroxy-tetrahydrodipicolinate (HTPA) to tetrahydrodipicolinate. The protein is 4-hydroxy-tetrahydrodipicolinate reductase of Streptococcus sanguinis (strain SK36).